The following is a 297-amino-acid chain: tRNA (guanine-N(7)-)-methyltransferase (297 aa).

Residues Glu-22, Glu-47, Asp-74, and Asp-97 each coordinate S-adenosyl-L-methionine. Asp-97 is an active-site residue. Substrate is bound by residues Lys-101, Asp-133, and 165 to 168 (TKYE).

This sequence belongs to the class I-like SAM-binding methyltransferase superfamily. TrmB family.

The enzyme catalyses guanosine(46) in tRNA + S-adenosyl-L-methionine = N(7)-methylguanosine(46) in tRNA + S-adenosyl-L-homocysteine. The protein operates within tRNA modification; N(7)-methylguanine-tRNA biosynthesis. Its function is as follows. Catalyzes the formation of N(7)-methylguanine at position 46 (m7G46) in tRNA. The polypeptide is tRNA (guanine-N(7)-)-methyltransferase (Aquifex aeolicus (strain VF5)).